The primary structure comprises 902 residues: 4-hydroxyphenylacetate decarboxylase glycyl radical subunit (902 aa).

Positions 38–774 constitute a PFL domain; sequence KRAEDLLDVY…ATLATPDGRL (737 aa). 2 residues coordinate 4-hydroxyphenylacetate: Ser-348 and Cys-507. Cys-507 functions as the Cysteine radical intermediate in the catalytic mechanism. Glu-509 (proton donor) is an active-site residue. 2 residues coordinate 4-hydroxyphenylacetate: His-540 and Glu-641. Positions 782-902 constitute a Glycine radical domain; it reads GSVSAYAGTD…VIARTEYEGV (121 aa). Glycine radical is present on Gly-877.

It belongs to the glycyl radical enzyme (GRE) family. HPAD subfamily. As to quaternary structure, heterooctamer consisting of 4 large (HpdB) subunits and 4 small (HpdC) subunits, arranged as a tetramer of heterodimers. Also forms a catalytically inactive homodimer. Requires the activating protein CsdA to generate the key active site glycyl radical that is involved in catalysis. In terms of processing, phosphorylated on serine. Phosphorylation may trigger the formation of the active heterooctamers and thereby regulates enzyme activity.

The enzyme catalyses 4-hydroxyphenylacetate + H(+) = 4-methylphenol + CO2. It catalyses the reaction 3,4-dihydroxyphenylacetate + H(+) = 4-methylcatechol + CO2. Glycyl radical subunit of the HPA decarboxylase that decarboxylates phenylacetates with a hydroxyl group in the p-position. Active toward 4-hydroxyphenylacetate and 3,4-dihydroxyphenylacetate, forming 4-methylphenol and 4-methylcatechol, respectively. Is likely involved in the catabolism of aromatic amino acids such as tyrosine fermentation. 4-methylphenol (p-cresol) formation provides metabolic toxicity, which allows an active suppression of other microbes and may provide growth advantages for the producers in highly competitive environments. The large subunit is the catalytic subunit that binds the substrate. This is 4-hydroxyphenylacetate decarboxylase glycyl radical subunit from Clostridioides difficile (strain CD196) (Peptoclostridium difficile).